Consider the following 425-residue polypeptide: Histidine--tRNA ligase (425 aa).

The protein belongs to the class-II aminoacyl-tRNA synthetase family. As to quaternary structure, homodimer.

It localises to the cytoplasm. The enzyme catalyses tRNA(His) + L-histidine + ATP = L-histidyl-tRNA(His) + AMP + diphosphate + H(+). This Streptococcus uberis (strain ATCC BAA-854 / 0140J) protein is Histidine--tRNA ligase.